Reading from the N-terminus, the 141-residue chain is Flagellar assembly factor FliW 1 (141 aa).

It belongs to the FliW family. As to quaternary structure, interacts with translational regulator CsrA and flagellin(s).

It is found in the cytoplasm. Functionally, acts as an anti-CsrA protein, binds CsrA and prevents it from repressing translation of its target genes, one of which is flagellin. Binds to flagellin and participates in the assembly of the flagellum. The sequence is that of Flagellar assembly factor FliW 1 from Desulfotalea psychrophila (strain LSv54 / DSM 12343).